The following is a 180-amino-acid chain: Translation initiation factor IF-3 (180 aa).

Belongs to the IF-3 family. Monomer.

Its subcellular location is the cytoplasm. Its function is as follows. IF-3 binds to the 30S ribosomal subunit and shifts the equilibrium between 70S ribosomes and their 50S and 30S subunits in favor of the free subunits, thus enhancing the availability of 30S subunits on which protein synthesis initiation begins. The chain is Translation initiation factor IF-3 from Salmonella typhi.